Reading from the N-terminus, the 326-residue chain is Virulence factor CaO19.6688 (326 aa).

Disordered stretches follow at residues 19 to 91 (FNSL…KLPS), 112 to 137 (EEDN…GTTK), 161 to 184 (NTTI…PSFP), 222 to 245 (NVGQ…NDLL), and 276 to 326 (YEYG…PKIK). 3 stretches are compositionally biased toward low complexity: residues 21–42 (SLKS…SSSS), 53–78 (NRNT…NTTP), and 117–137 (EQQL…GTTK).

Virulence factor involved in pathogen-host interaction. Modulates host pro-inflammatory cytokine interleukin-1 beta (IL1B) expression. The chain is Virulence factor CaO19.6688 from Candida albicans (strain SC5314 / ATCC MYA-2876) (Yeast).